Here is a 198-residue protein sequence, read N- to C-terminus: RxLR effector protein Htp1 (198 aa).

Residues 1-23 (MRIHHPLTLAALCVVLHESLGAA) form the signal peptide. Positions 46-49 (RHLR) match the RxLR motif. Disordered regions lie at residues 48–101 (LRSD…TPMK) and 115–198 (TKNA…PTFD). Asparagine 70 carries an N-linked (GlcNAc...) asparagine glycan. Residues 70–91 (NNSQEQATTGNSVETNQVPSTE) are compositionally biased toward polar residues. Positions 126–137 (DDDDSDFSDDDV) are enriched in acidic residues. Over residues 173–191 (APTNAPTGTDAPTDAPTDA) the composition is skewed to low complexity.

This sequence belongs to the RxLR effector family. In terms of assembly, interacts with the effector Htp3 within the host cells.

The protein localises to the secreted. Its subcellular location is the host cell. Functionally, effector involved in the disease saprolegniosis in salmonids and other freshwater fish, resulting in considerable economic losses in aquaculture. Within the host fish cells, Htp1 is involved in the uptake of the S.parasitica effector Htp3 at a neutral pH (pH 7.5) and its release from vesicles into host cytosol where it degrades nucleic acids. The protein is RxLR effector protein Htp1 of Saprolegnia parasitica (strain CBS 223.65).